Consider the following 312-residue polypeptide: HPr kinase/phosphorylase (312 aa).

Residues histidine 139 and lysine 160 contribute to the active site. 154–161 (GSSGVGKS) lines the ATP pocket. Serine 161 contributes to the Mg(2+) binding site. The active-site Proton acceptor; for phosphorylation activity. Proton donor; for dephosphorylation activity is the aspartate 178. The interval 202–211 (LEIRGLGIIN) is important for the catalytic mechanism of both phosphorylation and dephosphorylation. Glutamate 203 provides a ligand contact to Mg(2+). Arginine 244 is a catalytic residue. The tract at residues 265-270 (PVRPGR) is important for the catalytic mechanism of dephosphorylation.

It belongs to the HPrK/P family. As to quaternary structure, homohexamer. It depends on Mg(2+) as a cofactor.

The enzyme catalyses [HPr protein]-L-serine + ATP = [HPr protein]-O-phospho-L-serine + ADP + H(+). It carries out the reaction [HPr protein]-O-phospho-L-serine + phosphate + H(+) = [HPr protein]-L-serine + diphosphate. Functionally, catalyzes the ATP- as well as the pyrophosphate-dependent phosphorylation of a specific serine residue in HPr, a phosphocarrier protein of the phosphoenolpyruvate-dependent sugar phosphotransferase system (PTS). HprK/P also catalyzes the pyrophosphate-producing, inorganic phosphate-dependent dephosphorylation (phosphorolysis) of seryl-phosphorylated HPr (P-Ser-HPr). The two antagonistic activities of HprK/P are regulated by several intracellular metabolites, which change their concentration in response to the absence or presence of rapidly metabolisable carbon sources (glucose, fructose, etc.) in the growth medium. Therefore, by controlling the phosphorylation state of HPr, HPrK/P is a sensor enzyme that plays a major role in the regulation of carbon metabolism and sugar transport: it mediates carbon catabolite repression (CCR), and regulates PTS-catalyzed carbohydrate uptake and inducer exclusion. In Listeria innocua serovar 6a (strain ATCC BAA-680 / CLIP 11262), this protein is HPr kinase/phosphorylase.